A 296-amino-acid chain; its full sequence is Glycine--tRNA ligase alpha subunit (296 aa).

Belongs to the class-II aminoacyl-tRNA synthetase family. In terms of assembly, tetramer of two alpha and two beta subunits.

It is found in the cytoplasm. It carries out the reaction tRNA(Gly) + glycine + ATP = glycyl-tRNA(Gly) + AMP + diphosphate. The protein is Glycine--tRNA ligase alpha subunit of Desulfitobacterium hafniense (strain DSM 10664 / DCB-2).